The following is a 305-amino-acid chain: Tyrosine recombinase XerC (305 aa).

The Core-binding (CB) domain occupies 4–95 (TSIQALINKW…AVKNFYRFLE (92 aa)). Residues 116 to 298 (LLPKALSEDD…SIKHLEAVYT (183 aa)) form the Tyr recombinase domain. Active-site residues include R159, K182, H250, R253, and H276. The active-site O-(3'-phospho-DNA)-tyrosine intermediate is Y285.

This sequence belongs to the 'phage' integrase family. XerC subfamily. Forms a cyclic heterotetrameric complex composed of two molecules of XerC and two molecules of XerD.

The protein localises to the cytoplasm. Functionally, site-specific tyrosine recombinase, which acts by catalyzing the cutting and rejoining of the recombining DNA molecules. The XerC-XerD complex is essential to convert dimers of the bacterial chromosome into monomers to permit their segregation at cell division. It also contributes to the segregational stability of plasmids. In Rickettsia africae (strain ESF-5), this protein is Tyrosine recombinase XerC.